Here is a 137-residue protein sequence, read N- to C-terminus: Basic phospholipase A2 DsM-S1 (137 aa).

An N-terminal signal peptide occupies residues 1–16 (MRTLWIVAVCLIGVEG). Disulfide bonds link cysteine 42–cysteine 131, cysteine 44–cysteine 60, cysteine 59–cysteine 111, cysteine 65–cysteine 137, cysteine 66–cysteine 104, cysteine 73–cysteine 97, and cysteine 91–cysteine 102. Ca(2+) is bound by residues tyrosine 43, glycine 45, and glycine 47. Histidine 63 is an active-site residue. Aspartate 64 lines the Ca(2+) pocket. Aspartate 105 is a catalytic residue.

The protein belongs to the phospholipase A2 family. Group II subfamily. D49 sub-subfamily. It depends on Ca(2+) as a cofactor. Expressed by the venom gland.

The protein localises to the secreted. It carries out the reaction a 1,2-diacyl-sn-glycero-3-phosphocholine + H2O = a 1-acyl-sn-glycero-3-phosphocholine + a fatty acid + H(+). Functionally, snake venom phospholipase A2 (PLA2) that is neurotoxic. PLA2 catalyzes the calcium-dependent hydrolysis of the 2-acyl groups in 3-sn-phosphoglycerides. The chain is Basic phospholipase A2 DsM-S1 from Daboia siamensis (Eastern Russel's viper).